The following is a 306-amino-acid chain: Elongation factor Ts (306 aa).

Residues 81-84 (TDFV) form an involved in Mg(2+) ion dislocation from EF-Tu region.

It belongs to the EF-Ts family.

It localises to the cytoplasm. Functionally, associates with the EF-Tu.GDP complex and induces the exchange of GDP to GTP. It remains bound to the aminoacyl-tRNA.EF-Tu.GTP complex up to the GTP hydrolysis stage on the ribosome. The sequence is that of Elongation factor Ts from Polaromonas naphthalenivorans (strain CJ2).